A 137-amino-acid chain; its full sequence is Phospholipase A2 homolog PLA2-03 (137 aa).

An N-terminal signal peptide occupies residues 1 to 16 (MRTLWIVAVLLVGVEG). Disulfide bonds link Cys42–Cys131, Cys44–Cys60, Cys59–Cys111, Cys65–Cys137, Cys66–Cys104, Cys73–Cys97, and Cys91–Cys102. The important for membrane-damaging activities in eukaryotes and bacteria; heparin-binding stretch occupies residues 121-133 (KKYKIFPKFLCKK).

The protein belongs to the phospholipase A2 family. Group II subfamily. K49 sub-subfamily. As to expression, expressed by the venom gland.

The protein resides in the secreted. Functionally, snake venom phospholipase A2 homolog that lacks enzymatic activity. Is myotoxic and displays edema-inducing activities in mouse paw. A model of myotoxic mechanism has been proposed: an apo Lys49-PLA2 is activated by the entrance of a hydrophobic molecule (e.g. fatty acid) at the hydrophobic channel of the protein leading to a reorientation of a monomer. This reorientation causes a transition between 'inactive' to 'active' states, causing alignment of C-terminal and membrane-docking sites (MDoS) side-by-side and putting the membrane-disruption sites (MDiS) in the same plane, exposed to solvent and in a symmetric position for both monomers. The MDoS region stabilizes the toxin on membrane by the interaction of charged residues with phospholipid head groups. Subsequently, the MDiS region destabilizes the membrane with penetration of hydrophobic residues. This insertion causes a disorganization of the membrane, allowing an uncontrolled influx of ions (i.e. calcium and sodium), and eventually triggering irreversible intracellular alterations and cell death. The polypeptide is Phospholipase A2 homolog PLA2-03 (Ovophis okinavensis (Ryukyu Island pit viper)).